The chain runs to 447 residues: Monocarboxylate transporter 11 (447 aa).

Over 1-11 (MTPKPAGPPDG) the chain is Cytoplasmic. Helical transmembrane passes span 12–32 (GWGWVVAAAAFAVNGLSYGLL), 54–74 (AWVSALALAVQQAASPVGSAL), 80–100 (ARPVVMVGGVLTSLGLVFSAF), 107–127 (LYLGLGLLAGSGWALVFAPAL), 139–159 (VLAVGLALTGNGASSLLLAPA), 162–182 (FLLDTFGWRGALLLLGAVTLH), 219–239 (AFSVFALGTALIGGGYFVPYV), 249–269 (GMGGYGAALVVAVAAVGDACA), 288–308 (LVVFGSLTGLGVLAMGLVPTV), 330–350 (GSYAPLVFGVLPGLVGIGGVV), 354–374 (GLVMMLMSLGGLLGPPLSGFL), and 383–403 (ASFLVCSSFILSGSFIYMGLP). At 404-447 (RALPSCRPASPPATPPPERGELLPVPQVSLLSAGGTGSIRDTTC) the chain is on the cytoplasmic side.

Belongs to the major facilitator superfamily. Monocarboxylate porter (TC 2.A.1.13) family. As to quaternary structure, interacts with isoform 2 of BSG.

The protein localises to the endoplasmic reticulum membrane. It is found in the cell membrane. The enzyme catalyses pyruvate(out) + H(+)(out) = pyruvate(in) + H(+)(in). Functionally, proton-linked monocarboxylate transporter. It catalyzes the transport of pyruvate across the plasma membrane. Probably involved in hepatic lipid metabolism: overexpression results in an increase of triacylglycerol(TAG) levels, small increases in intracellular diacylglycerols and decreases in lysophosphatidylcholine, cholesterol ester and sphingomyelin lipids. In Mus musculus (Mouse), this protein is Monocarboxylate transporter 11 (Slc16a11).